Consider the following 2489-residue polypeptide: Protein YPR117W (2489 aa).

Transmembrane regions (helical) follow at residues 19–39 and 128–148; these read FMLF…WILM and VLSI…LALT. 15 N-linked (GlcNAc...) asparagine glycosylation sites follow: asparagine 191, asparagine 210, asparagine 311, asparagine 452, asparagine 468, asparagine 605, asparagine 638, asparagine 663, asparagine 698, asparagine 789, asparagine 835, asparagine 981, asparagine 1255, asparagine 1404, and asparagine 1476. Residues 1610-1676 are a coiled coil; the sequence is LTQEKLATER…RLHTVNTILS (67 aa). Residues 1685 to 1704 form a disordered region; sequence PGGNTDGDSSSSLSDTDVNL. Low complexity predominate over residues 1690-1704; it reads DGDSSSSLSDTDVNL. N-linked (GlcNAc...) asparagine glycosylation is found at asparagine 1978 and asparagine 2189. Phosphoserine is present on residues serine 2254 and serine 2278. An N-linked (GlcNAc...) asparagine glycan is attached at asparagine 2279. Residues 2451 to 2471 are compositionally biased toward polar residues; it reads SSTHSSDIRSINSDETYNEND. The disordered stretch occupies residues 2451–2489; the sequence is SSTHSSDIRSINSDETYNENDGNGVKPFYPVTSEFSKNK.

The protein resides in the cell membrane. Its subcellular location is the endoplasmic reticulum membrane. It is found in the mitochondrion membrane. Tube-forming lipid transport protein which may bind to phosphatidylinositols and may affect phosphatidylinositol-4,5-bisphosphate (PtdIns-4,5-P2) distribution. The polypeptide is Protein YPR117W (Saccharomyces cerevisiae (strain ATCC 204508 / S288c) (Baker's yeast)).